The sequence spans 947 residues: Protein NETWORKED 2D (947 aa).

The NAB domain occupies 10–90 (YSWWWASHIR…ERYDHISTEL (81 aa)). 3 coiled-coil regions span residues 176–205 (KPEAMGEIDKLQKEILALQTEKEFVKSSYE), 247–342 (MTET…HFES), and 375–433 (TALI…VLDK). Disordered stretches follow at residues 455 to 555 (NLHE…DKTD) and 580 to 620 (EKQG…GEPD). A compositionally biased stretch (basic and acidic residues) spans 474 to 514 (PQKDLEGEKRTLDISEEIKEHQKETGEEKKEAPVKSVKFEQ). Polar residues predominate over residues 525–536 (TIPSTNPDTVLE). Composition is skewed to basic and acidic residues over residues 537 to 555 (STEKVDSDLEKQDASDKTD), 580 to 589 (EKQGESDKID), and 610 to 620 (EDQKEKEGEPD). Coiled-coil stretches lie at residues 645–684 (RNFKDMKKTLDETKTKMKTENATKDDEIKLLREKMSLLQK) and 744–773 (GQIQSYDTSIEDLQAEISKLEQRRKQDGSS).

This sequence belongs to the NET family.

Functionally, plant-specific actin binding protein. May be part of a membrane-cytoskeletal adapter complex. The sequence is that of Protein NETWORKED 2D from Arabidopsis thaliana (Mouse-ear cress).